The following is an 835-amino-acid chain: Pre-mRNA-processing protein 40C (835 aa).

Over residues 1 to 20 (MEGENTTDPPYTTAASSGQS) the composition is skewed to polar residues. The tract at residues 1–22 (MEGENTTDPPYTTAASSGQSIF) is disordered. WW domains are found at residues 243 to 276 (GNRLDAWTAHKSEAGVLYYYNSVTGQSTYEKPPG) and 295 to 328 (SLPGTDWALVSTNDGKKYYYNNKTKVSSWQIPAE). Residues 397–459 (SGMPVSSTIT…DSGPSKEECS (63 aa)) are disordered. The segment covering 400–428 (PVSSTITSEANSGKTTEVTPSGESGNSTG) has biased composition (polar residues). FF domains lie at 455 to 509 (KEEC…YVKT), 519 to 577 (RAAH…RVLS), and 590 to 643 (RAAA…YIAE). Disordered stretches follow at residues 649-677 (RGDDHEMKARDEEDKLRERERELRKRKER) and 714-738 (TESKPILERDPQKRASNPDLEPADK). 2 consecutive FF domains span residues 691–748 (RKEA…HVKS) and 750–815 (YERC…YVED).

Belongs to the PRPF40 family. Interacts (via the WW domains) with the phosphorylated C-terminal domain of NRPB1 (via CTD domain). As to expression, expressed in roots, shoots, rosette leaves, cauline leaves, stems and flowers.

The protein localises to the nucleus. Functionally, binds the phosphorylated C-terminal domain (CTD) of the largest subunit of RNA polymerase II and functions as a scaffold for RNA processing machineries. May be involved in pre-mRNA splicing. This chain is Pre-mRNA-processing protein 40C, found in Arabidopsis thaliana (Mouse-ear cress).